Here is a 195-residue protein sequence, read N- to C-terminus: uncharacterized protein (195 aa).

The helical transmembrane segment at 175 to 195 (ILGKISGFFGSIVSTIFSLFG) threads the bilayer.

It is found in the membrane. This is an uncharacterized protein from Methanocaldococcus jannaschii (strain ATCC 43067 / DSM 2661 / JAL-1 / JCM 10045 / NBRC 100440) (Methanococcus jannaschii).